Here is a 401-residue protein sequence, read N- to C-terminus: Bifunctional enzyme IspD/IspF (401 aa).

Positions 1-234 (MQKPPRTAAI…SRLTAALGDI (234 aa)) are 2-C-methyl-D-erythritol 4-phosphate cytidylyltransferase. Residues 235–401 (RTGTGYDVHA…SPWGAEGQAS (167 aa)) are 2-C-methyl-D-erythritol 2,4-cyclodiphosphate synthase. D241 and H243 together coordinate a divalent metal cation. Residues 241–243 (DVH) and 267–268 (HS) contribute to the 4-CDP-2-C-methyl-D-erythritol 2-phosphate site. H275 is a binding site for a divalent metal cation. 4-CDP-2-C-methyl-D-erythritol 2-phosphate contacts are provided by residues 289–291 (DIG), 365–368 (TTSE), F372, and R375.

It in the N-terminal section; belongs to the IspD/TarI cytidylyltransferase family. IspD subfamily. The protein in the C-terminal section; belongs to the IspF family. The cofactor is a divalent metal cation.

It carries out the reaction 2-C-methyl-D-erythritol 4-phosphate + CTP + H(+) = 4-CDP-2-C-methyl-D-erythritol + diphosphate. The catalysed reaction is 4-CDP-2-C-methyl-D-erythritol 2-phosphate = 2-C-methyl-D-erythritol 2,4-cyclic diphosphate + CMP. The protein operates within isoprenoid biosynthesis; isopentenyl diphosphate biosynthesis via DXP pathway; isopentenyl diphosphate from 1-deoxy-D-xylulose 5-phosphate: step 2/6. It functions in the pathway isoprenoid biosynthesis; isopentenyl diphosphate biosynthesis via DXP pathway; isopentenyl diphosphate from 1-deoxy-D-xylulose 5-phosphate: step 4/6. Bifunctional enzyme that catalyzes the formation of 4-diphosphocytidyl-2-C-methyl-D-erythritol from CTP and 2-C-methyl-D-erythritol 4-phosphate (MEP) (IspD), and catalyzes the conversion of 4-diphosphocytidyl-2-C-methyl-D-erythritol 2-phosphate (CDP-ME2P) to 2-C-methyl-D-erythritol 2,4-cyclodiphosphate (ME-CPP) with a corresponding release of cytidine 5-monophosphate (CMP) (IspF). The protein is Bifunctional enzyme IspD/IspF of Rhodopseudomonas palustris (strain HaA2).